Reading from the N-terminus, the 263-residue chain is Proteasome subunit alpha (263 aa).

The interval 229–263 (AALLQDTPPDDADADADAGKKPANDGNLPPNDDKS) is disordered.

This sequence belongs to the peptidase T1A family. The 20S proteasome core is composed of 14 alpha and 14 beta subunits that assemble into four stacked heptameric rings, resulting in a barrel-shaped structure. The two inner rings, each composed of seven catalytic beta subunits, are sandwiched by two outer rings, each composed of seven alpha subunits. The catalytic chamber with the active sites is on the inside of the barrel. Has a gated structure, the ends of the cylinder being occluded by the N-termini of the alpha-subunits. Is capped by the proteasome-associated ATPase, ARC.

The protein localises to the cytoplasm. It functions in the pathway protein degradation; proteasomal Pup-dependent pathway. Its activity is regulated as follows. The formation of the proteasomal ATPase ARC-20S proteasome complex, likely via the docking of the C-termini of ARC into the intersubunit pockets in the alpha-rings, may trigger opening of the gate for substrate entry. Interconversion between the open-gate and close-gate conformations leads to a dynamic regulation of the 20S proteasome proteolysis activity. In terms of biological role, component of the proteasome core, a large protease complex with broad specificity involved in protein degradation. The protein is Proteasome subunit alpha of Actinosynnema mirum (strain ATCC 29888 / DSM 43827 / JCM 3225 / NBRC 14064 / NCIMB 13271 / NRRL B-12336 / IMRU 3971 / 101).